A 404-amino-acid chain; its full sequence is Zinc finger CCCH domain-containing protein 15 homolog (404 aa).

The segment covering 1-10 has biased composition (pro residues); the sequence is MPPKKAPPGP. The tract at residues 1 to 71 is disordered; sequence MPPKKAPPGP…KRKEEKEKKL (71 aa). Positions 12–28 are enriched in basic and acidic residues; it reads KKTEQKKKEKVIEDKTF. The span at 38–50 shows a compositional bias: low complexity; it reads QQKFIQQVQKQVQ. Residues 56-71 show a composition bias toward basic and acidic residues; it reads PRQDGDKRKEEKEKKL. 2 consecutive C3H1-type zinc fingers follow at residues 94–121 and 165–202; these read DPKS…HDLS and PTTD…HALP. The residue at position 218 (threonine 218) is a Phosphothreonine. Serine 221 is modified (phosphoserine). Positions 246 to 270 form a coiled coil; sequence LAWKKRKIAEKKAKLAAEEERKKSD. Low complexity-rich tracts occupy residues 352–361 and 369–380; these read EAAKTAAAED and PSSSAPANDAAP. The disordered stretch occupies residues 352–380; sequence EAAKTAAAEDAAADEDGPSSSAPANDAAP.

This sequence belongs to the ZC3H15/TMA46 family.

This Drosophila melanogaster (Fruit fly) protein is Zinc finger CCCH domain-containing protein 15 homolog.